The chain runs to 435 residues: Serine--tRNA ligase (435 aa).

The interval 41-70 (QVKTEELQAQRNSRSKSIGQAKAKGDHEEA) is disordered. The segment covering 49–58 (AQRNSRSKSI) has biased composition (polar residues). Position 242–244 (242–244 (TAE)) interacts with L-serine. 273 to 275 (RSE) is a binding site for ATP. Glu-296 provides a ligand contact to L-serine. 360–363 (EISS) lines the ATP pocket. An L-serine-binding site is contributed by Ser-396.

Belongs to the class-II aminoacyl-tRNA synthetase family. Type-1 seryl-tRNA synthetase subfamily. Homodimer. The tRNA molecule binds across the dimer.

It is found in the cytoplasm. It carries out the reaction tRNA(Ser) + L-serine + ATP = L-seryl-tRNA(Ser) + AMP + diphosphate + H(+). The catalysed reaction is tRNA(Sec) + L-serine + ATP = L-seryl-tRNA(Sec) + AMP + diphosphate + H(+). It functions in the pathway aminoacyl-tRNA biosynthesis; selenocysteinyl-tRNA(Sec) biosynthesis; L-seryl-tRNA(Sec) from L-serine and tRNA(Sec): step 1/1. Catalyzes the attachment of serine to tRNA(Ser). Is also able to aminoacylate tRNA(Sec) with serine, to form the misacylated tRNA L-seryl-tRNA(Sec), which will be further converted into selenocysteinyl-tRNA(Sec). In Aliivibrio fischeri (strain MJ11) (Vibrio fischeri), this protein is Serine--tRNA ligase.